A 385-amino-acid polypeptide reads, in one-letter code: Actin-2 (385 aa).

This sequence belongs to the actin family. ARP1 subfamily.

It is found in the cytoplasm. Its subcellular location is the cytoskeleton. The chain is Actin-2 from Pneumocystis carinii.